The following is a 106-amino-acid chain: Small ribosomal subunit protein uS10 (106 aa).

The protein belongs to the universal ribosomal protein uS10 family. In terms of assembly, part of the 30S ribosomal subunit.

In terms of biological role, involved in the binding of tRNA to the ribosomes. The polypeptide is Small ribosomal subunit protein uS10 (Prochlorococcus marinus (strain MIT 9301)).